The primary structure comprises 107 residues: Ferredoxin (107 aa).

4Fe-4S ferredoxin-type domains lie at 8–37 and 38–67; these read ERVVIDQDICISCGACVAACPYQALELDEN and GKSRLIWEKCKDDFSCVAVCPVKAISKASE. Residues Cys-17, Cys-20, and Cys-23 each contribute to the [4Fe-4S] cluster site. Cys-27, Cys-47, and Cys-53 together coordinate [3Fe-4S] cluster. A [4Fe-4S] cluster-binding site is contributed by Cys-57.

As to quaternary structure, monomer. [4Fe-4S] cluster is required as a cofactor. [3Fe-4S] cluster serves as cofactor. Post-translationally, the N-terminus is blocked.

In terms of biological role, ferredoxins are iron-sulfur proteins that transfer electrons in a wide variety of metabolic reactions. This is Ferredoxin from Pyrobaculum islandicum (strain DSM 4184 / JCM 9189 / GEO3).